We begin with the raw amino-acid sequence, 167 residues long: Large ribosomal subunit protein bL9 (167 aa).

The protein belongs to the bacterial ribosomal protein bL9 family.

Its function is as follows. Binds to the 23S rRNA. The sequence is that of Large ribosomal subunit protein bL9 from Chlamydia trachomatis serovar L2 (strain ATCC VR-902B / DSM 19102 / 434/Bu).